Reading from the N-terminus, the 578-residue chain is Sulfite reductase [NADPH] hemoprotein beta-component (578 aa).

The [4Fe-4S] cluster site is built by Cys441, Cys447, Cys487, and Cys491. Cys491 is a siroheme binding site.

It belongs to the nitrite and sulfite reductase 4Fe-4S domain family. As to quaternary structure, alpha(8)-beta(8). The alpha component is a flavoprotein, the beta component is a hemoprotein. Requires siroheme as cofactor. The cofactor is [4Fe-4S] cluster.

It catalyses the reaction hydrogen sulfide + 3 NADP(+) + 3 H2O = sulfite + 3 NADPH + 4 H(+). It participates in sulfur metabolism; hydrogen sulfide biosynthesis; hydrogen sulfide from sulfite (NADPH route): step 1/1. Its function is as follows. Component of the sulfite reductase complex that catalyzes the 6-electron reduction of sulfite to sulfide. This is one of several activities required for the biosynthesis of L-cysteine from sulfate. The protein is Sulfite reductase [NADPH] hemoprotein beta-component of Vibrio parahaemolyticus serotype O3:K6 (strain RIMD 2210633).